Here is a 199-residue protein sequence, read N- to C-terminus: Recombination protein RecR (199 aa).

Residues 57–72 (CSVCGNITEDDPCPIC) form a C4-type zinc finger. Positions 80 to 176 (SRVLVVERSR…KVTRLAHGLS (97 aa)) constitute a Toprim domain.

It belongs to the RecR family.

In terms of biological role, may play a role in DNA repair. It seems to be involved in an RecBC-independent recombinational process of DNA repair. It may act with RecF and RecO. This is Recombination protein RecR from Limosilactobacillus fermentum (strain NBRC 3956 / LMG 18251) (Lactobacillus fermentum).